Here is a 299-residue protein sequence, read N- to C-terminus: Bifunctional protein FolD (299 aa).

NADP(+)-binding positions include 179–181 (GPG) and isoleucine 245.

This sequence belongs to the tetrahydrofolate dehydrogenase/cyclohydrolase family. In terms of assembly, homodimer.

The enzyme catalyses (6R)-5,10-methylene-5,6,7,8-tetrahydrofolate + NADP(+) = (6R)-5,10-methenyltetrahydrofolate + NADPH. It catalyses the reaction (6R)-5,10-methenyltetrahydrofolate + H2O = (6R)-10-formyltetrahydrofolate + H(+). Its pathway is one-carbon metabolism; tetrahydrofolate interconversion. Catalyzes the oxidation of 5,10-methylenetetrahydrofolate to 5,10-methenyltetrahydrofolate and then the hydrolysis of 5,10-methenyltetrahydrofolate to 10-formyltetrahydrofolate. The chain is Bifunctional protein FolD from Deinococcus radiodurans (strain ATCC 13939 / DSM 20539 / JCM 16871 / CCUG 27074 / LMG 4051 / NBRC 15346 / NCIMB 9279 / VKM B-1422 / R1).